The chain runs to 285 residues: Diaminopimelate epimerase (285 aa).

Residues N11 and N62 each coordinate substrate. Residue C71 is the Proton donor of the active site. Substrate contacts are provided by residues 72 to 73 (GN), N167, N200, and 218 to 219 (ER). The active-site Proton acceptor is C227. A substrate-binding site is contributed by 228-229 (GT).

It belongs to the diaminopimelate epimerase family. In terms of assembly, homodimer.

The protein localises to the cytoplasm. It catalyses the reaction (2S,6S)-2,6-diaminopimelate = meso-2,6-diaminopimelate. Its pathway is amino-acid biosynthesis; L-lysine biosynthesis via DAP pathway; DL-2,6-diaminopimelate from LL-2,6-diaminopimelate: step 1/1. Its function is as follows. Catalyzes the stereoinversion of LL-2,6-diaminopimelate (L,L-DAP) to meso-diaminopimelate (meso-DAP), a precursor of L-lysine and an essential component of the bacterial peptidoglycan. The protein is Diaminopimelate epimerase of Agathobacter rectalis (strain ATCC 33656 / DSM 3377 / JCM 17463 / KCTC 5835 / VPI 0990) (Eubacterium rectale).